The primary structure comprises 279 residues: MVWFKRVKPSIRTTDKRDVPEGLWWKCEECGAMIHKKQLEDHVYTCSDCGYHFRISPYRYFSILFDNDTYQEFDDALRAGDPLGFTDTKKYSDRVHDTIGKSGKTEACRNAWGEVGGNPLVVSAMDFGFIGGSMGSVVGEKISRAVDKAVELNAPLLVISQSGGARMMEGAFSLMQMAKTSARLTLLSEKRLPFFSLMTDPTMGGITASFAMLGDVNLSEPKALIGFAGPRVIRDTIKRDLPEGFQRAEFLHEQGFVDCIVHRKELKSQIVRLAGMLKV.

The CoA carboxyltransferase N-terminal domain occupies leucine 23 to valine 279. Zn(2+)-binding residues include cysteine 27, cysteine 30, cysteine 46, and cysteine 49. The segment at cysteine 27–cysteine 49 adopts a C4-type zinc-finger fold.

The protein belongs to the AccD/PCCB family. In terms of assembly, acetyl-CoA carboxylase is a heterohexamer composed of biotin carboxyl carrier protein (AccB), biotin carboxylase (AccC) and two subunits each of ACCase subunit alpha (AccA) and ACCase subunit beta (AccD). Zn(2+) serves as cofactor.

The protein localises to the cytoplasm. The catalysed reaction is N(6)-carboxybiotinyl-L-lysyl-[protein] + acetyl-CoA = N(6)-biotinyl-L-lysyl-[protein] + malonyl-CoA. Its pathway is lipid metabolism; malonyl-CoA biosynthesis; malonyl-CoA from acetyl-CoA: step 1/1. Functionally, component of the acetyl coenzyme A carboxylase (ACC) complex. Biotin carboxylase (BC) catalyzes the carboxylation of biotin on its carrier protein (BCCP) and then the CO(2) group is transferred by the transcarboxylase to acetyl-CoA to form malonyl-CoA. The sequence is that of Acetyl-coenzyme A carboxylase carboxyl transferase subunit beta from Chlorobium limicola (strain DSM 245 / NBRC 103803 / 6330).